The sequence spans 637 residues: Protein arginine N-methyltransferase 5 (637 aa).

A2 is modified (N-acetylalanine). The TIM barrel stretch occupies residues 13-292 (RVSSGRDLNC…YLEYLSQNRP (280 aa)). One can recognise an SAM-dependent MTase PRMT-type domain in the interval 308–615 (LQSPLQPLMD…SNSKKVWYEW (308 aa)). An S-adenosyl-L-methionine-binding site is contributed by Y324. F327 contacts a protein. Residues 333–334 (KY), E392, and 419–420 (DM) contribute to the S-adenosyl-L-methionine site. Residues E435 and E444 each contribute to the a protein site. Catalysis depends on proton donor/acceptor residues E435 and E444. Positions 465-637 (PGEYTSFLAP…PTGRSYTIGL (173 aa)) are beta barrel. The tract at residues 488–494 (REKDRDP) is dimerization.

The protein belongs to the class I-like SAM-binding methyltransferase superfamily. Protein arginine N-methyltransferase family. As to quaternary structure, forms, at least, homodimers and homotetramers. Component of the methylosome complex, composed of PRMT5, WDR77 and CLNS1A. Found in a complex composed of PRMT5, WDR77 and RIOK1. RIOK1 and CLNS1A associate with PRMT5 in a mutually exclusive fashion, which allows the recruitment of distinct methylation substrates, such as nucleolin/NCL and Sm proteins, respectively. Interacts with PRDM1. Identified in a complex composed of methylosome and PRMT1 and ERH. Interacts with EGFR; methylates EGFR and stimulates EGFR-mediated ERK activation. Interacts with HOXA9. Interacts with SRGAP2. Found in a complex with COPRS, RUNX1 and CBFB. Interacts with CHTOP; the interaction symmetrically methylates CHTOP, but seems to require the presence of PRMT1. Interacts with EPB41L3; this modulates methylation of target proteins. Component of a high molecular weight E2F-pocket protein complex, CERC (cyclin E1 repressor complex). Associates with SWI/SNF remodeling complexes containing SMARCA2 and SMARCA4. Interacts with JAK2, SSTR1, SUPT5H, BRAF and with active RAF1. Interacts with LSM11, PRMT7 and SNRPD3. Interacts with COPRS; promoting its recruitment on histone H4. Interacts with CLNS1A/pICln. Identified in a complex with CLNS1A/pICln and Sm proteins. Interacts with RPS10. Interacts with WDR77. Interacts with IWS1. Interacts with CRY1. Interacts with POLR2A. Interacts with SMN1/SMN2. Interacts with LYAR; this interaction is direct. Interacts with TTC5/STRAP; this interaction is DNA damage-dependent and promotes PRMT5 interaction with p53/TP53. Interacts with p53/TP53 in response to DNA damage; the interaction is TTC5/STRAP dependent. Interacts with FAM47E; the interaction is direct, promotes PRMT5 localization to chromatin, and does not disrupt its association with WDR77 or STUB1. Interacts with TDRD6. Interacts with STUB1. Interacts with MBD2. Does not interact with MBD3.

The protein localises to the cytoplasm. The protein resides in the nucleus. It localises to the golgi apparatus. The enzyme catalyses L-arginyl-[protein] + 2 S-adenosyl-L-methionine = N(omega),N(omega)'-dimethyl-L-arginyl-[protein] + 2 S-adenosyl-L-homocysteine + 2 H(+). Its activity is regulated as follows. Activity is increased by EGF, HGF, FGF1 or FGF2 treatments, and slightly decreased by NGF treatment. In terms of biological role, arginine methyltransferase that can both catalyze the formation of omega-N monomethylarginine (MMA) and symmetrical dimethylarginine (sDMA), with a preference for the formation of MMA. Specifically mediates the symmetrical dimethylation of arginine residues in the small nuclear ribonucleoproteins Sm D1 (SNRPD1) and Sm D3 (SNRPD3); such methylation being required for the assembly and biogenesis of snRNP core particles. Methylates SUPT5H and may regulate its transcriptional elongation properties. May methylate the N-terminal region of MBD2. Mono- and dimethylates arginine residues of myelin basic protein (MBP) in vitro. May play a role in cytokine-activated transduction pathways. Negatively regulates cyclin E1 promoter activity and cellular proliferation. Methylates histone H2A and H4 'Arg-3' during germ cell development. Methylates histone H3 'Arg-8', which may repress transcription. Methylates the Piwi proteins (PIWIL1, PIWIL2 and PIWIL4), methylation of Piwi proteins being required for the interaction with Tudor domain-containing proteins and subsequent localization to the meiotic nuage. Methylates RPS10. Attenuates EGF signaling through the MAPK1/MAPK3 pathway acting at 2 levels. First, monomethylates EGFR; this enhances EGFR 'Tyr-1197' phosphorylation and PTPN6 recruitment, eventually leading to reduced SOS1 phosphorylation. Second, methylates RAF1 and probably BRAF, hence destabilizing these 2 signaling proteins and reducing their catalytic activity. Required for induction of E-selectin and VCAM-1, on the endothelial cells surface at sites of inflammation. Methylates HOXA9. Methylates and regulates SRGAP2 which is involved in cell migration and differentiation. Acts as a transcriptional corepressor in CRY1-mediated repression of the core circadian component PER1 by regulating the H4R3 dimethylation at the PER1 promoter. Methylates GM130/GOLGA2, regulating Golgi ribbon formation. Methylates H4R3 in genes involved in glioblastomagenesis in a CHTOP- and/or TET1-dependent manner. Symmetrically methylates POLR2A, a modification that allows the recruitment to POLR2A of proteins including SMN1/SMN2 and SETX. This is required for resolving RNA-DNA hybrids created by RNA polymerase II, that form R-loop in transcription terminal regions, an important step in proper transcription termination. Along with LYAR, binds the promoter of gamma-globin HBG1/HBG2 and represses its expression. Symmetrically methylates NCL. Methylates p53/TP53; methylation might possibly affect p53/TP53 target gene specificity. Involved in spliceosome maturation and mRNA splicing in prophase I spermatocytes through the catalysis of the symmetrical arginine dimethylation of SNRPB (small nuclear ribonucleoprotein-associated protein) and the interaction with tudor domain-containing protein TDRD6. The chain is Protein arginine N-methyltransferase 5 (Prmt5) from Mus musculus (Mouse).